The following is a 960-amino-acid chain: Leucine-rich repeat receptor-like serine/threonine-protein kinase SKM1 (960 aa).

An N-terminal signal peptide occupies residues 1 to 29 (MSTSHHHHHPPYLITTLFFLFLNFSCLHA). Residues 30-634 (NELELLLSFK…VRKRSTKSWW (605 aa)) lie on the Extracellular side of the membrane. A disulfide bridge links cysteine 61 with cysteine 68. N-linked (GlcNAc...) asparagine glycosylation is found at asparagine 70, asparagine 83, asparagine 103, asparagine 108, asparagine 129, and asparagine 134. LRR repeat units follow at residues 71–96 (ISRV…TFRL), 97–120 (PFLQ…IFTT), 122–146 (SPSL…FLPN), 149–168 (TLDL…IGVF), 169–194 (SNLR…NLSR), 196–216 (EFLT…LGKM), 217–240 (KNLK…IGGL), 241–264 (SSLN…LGDL), 265–288 (KKLE…IFSL), 290–312 (NLIS…VAQM), 313–336 (QSLE…VTSL), 338–360 (RLKV…LGKH), 361–384 (NNLT…LCDS), 386–408 (HLTK…LGMC), 409–432 (QSLE…FTKL), 434–454 (LVNF…TWDM), 455–477 (PQLE…FSRS), 478–501 (KRLK…LMTF), 503–525 (EIMD…LSSC), 526–549 (KNLV…FAEF), 550–573 (QVLS…LGNI), and 575–598 (SLVQ…AFLA). N-linked (GlcNAc...) asparagine glycosylation occurs at asparagine 191. The CLE45 peptide binding motif lies at 221–226 (WIYLGY). Asparagine 228 and asparagine 252 each carry an N-linked (GlcNAc...) asparagine glycan. N-linked (GlcNAc...) asparagine glycosylation is present at asparagine 324. N-linked (GlcNAc...) asparagine glycans are attached at residues asparagine 362 and asparagine 372. Residue asparagine 537 is glycosylated (N-linked (GlcNAc...) asparagine). Asparagine 580 and asparagine 600 each carry an N-linked (GlcNAc...) asparagine glycan. The chain crosses the membrane as a helical span at residues 635–655 (LIITSTFAAFLAVLVSGFFIV). The Cytoplasmic portion of the chain corresponds to 656 to 960 (LVFQRTHNVL…TYLSKILSLA (305 aa)). A Protein kinase domain is found at 691–953 (FTVNTILSSL…SSSSSCTTYL (263 aa)). Threonine 692 carries the post-translational modification Phosphothreonine. Residues 697 to 705 (LSSLKDQNV) and lysine 717 contribute to the ATP site. Tyrosine 834 is subject to Phosphotyrosine.

The protein belongs to the protein kinase superfamily. Ser/Thr protein kinase family. In terms of assembly, self-interacts. Binds to CLE45 present in the pistil, particularly under relatively high temperature (at 30 degrees Celsius). Expressed in pollen grains and roots vascular tissues. Present in roots.

It localises to the cell membrane. It carries out the reaction L-seryl-[protein] + ATP = O-phospho-L-seryl-[protein] + ADP + H(+). The enzyme catalyses L-threonyl-[protein] + ATP = O-phospho-L-threonyl-[protein] + ADP + H(+). Receptor with a serine/threonine-protein kinase activity. Together with SKM2, LRR-rich receptor-like kinase (LRR-RLK) required for male fertility by the perception of CLE43 and CLE45 peptides and the transduction of their promoting action in pollen tubes, especially under relatively high temperature (at 30 degrees Celsius), thus conferring tolerance against high temperature probably through the maintenance of mitochondrial activity. Seems to not be involved in the perception of CLE45 peptide in roots. This Arabidopsis thaliana (Mouse-ear cress) protein is Leucine-rich repeat receptor-like serine/threonine-protein kinase SKM1.